The chain runs to 600 residues: Rhesus-like glycoprotein B (600 aa).

Topologically, residues Met1 to Ser16 are cytoplasmic. A helical transmembrane segment spans residues Ile17–Trp37. At Val38 to Tyr73 the chain is on the extracellular side. The N-linked (GlcNAc...) asparagine glycan is linked to Asn46. A helical transmembrane segment spans residues Gly74 to Leu94. The Cytoplasmic segment spans residues Arg95 to Leu102. A helical transmembrane segment spans residues Gly103–Phe123. Residues Glu124–Thr145 are Extracellular-facing. Residues Val146–Gly166 form a helical membrane-spanning segment. The Cytoplasmic portion of the chain corresponds to Arg167–Pro170. Residues Leu171–Gly191 form a helical membrane-spanning segment. The Extracellular segment spans residues Glu192–Asp199. The chain crosses the membrane as a helical span at residues Val200–Phe220. Residues Leu221–Tyr240 are Cytoplasmic-facing. A helical transmembrane segment spans residues Phe241 to Ala261. Topologically, residues Pro262 to Thr274 are extracellular. Residues Phe275–Leu295 form a helical membrane-spanning segment. At Gly296–His303 the chain is on the cytoplasmic side. A helical membrane pass occupies residues Val304–Ile323. The Extracellular segment spans residues Asn324–Pro325. Residues Gly326–Ile346 form a helical membrane-spanning segment. The Cytoplasmic segment spans residues Ser347–Gly361. A helical membrane pass occupies residues Ile362–Trp382. Topologically, residues Lys383–Ala411 are extracellular. Residues Ala412–Leu432 traverse the membrane as a helical segment. Residues Lys433–Val600 are Cytoplasmic-facing. Residues Asn471–Val600 are disordered. A compositionally biased stretch (basic and acidic residues) spans Asn498–Arg510. The segment covering Glu519–Ser529 has biased composition (low complexity). The span at Arg540–Lys554 shows a compositional bias: basic residues. Basic and acidic residues predominate over residues Ser555–Glu566. Low complexity predominate over residues Asn571–Asn580. A compositionally biased stretch (polar residues) spans Ala581–Val600.

It belongs to the ammonium transporter (TC 2.A.49) family. Rh subfamily.

It is found in the membrane. Its function is as follows. May be a carbon dioxide/bicarbonate transporter. This is Rhesus-like glycoprotein B (rhgB) from Dictyostelium discoideum (Social amoeba).